The following is a 47-amino-acid chain: Defensin-like protein 2 (47 aa).

Intrachain disulfides connect Cys3/Cys47, Cys14/Cys36, Cys20/Cys41, and Cys24/Cys43.

The protein belongs to the DEFL family.

The protein is Defensin-like protein 2 of Zea mays (Maize).